A 203-amino-acid chain; its full sequence is Shikimate kinase (203 aa).

An ATP-binding site is contributed by 38–43 (GAGKST). S42 provides a ligand contact to Mg(2+). D60, R84, and G106 together coordinate substrate. Position 144 (R144) interacts with ATP. R163 is a binding site for substrate.

Belongs to the shikimate kinase family. As to quaternary structure, monomer. It depends on Mg(2+) as a cofactor.

It localises to the cytoplasm. The enzyme catalyses shikimate + ATP = 3-phosphoshikimate + ADP + H(+). It participates in metabolic intermediate biosynthesis; chorismate biosynthesis; chorismate from D-erythrose 4-phosphate and phosphoenolpyruvate: step 5/7. In terms of biological role, catalyzes the specific phosphorylation of the 3-hydroxyl group of shikimic acid using ATP as a cosubstrate. This chain is Shikimate kinase, found in Rhodopseudomonas palustris (strain ATCC BAA-98 / CGA009).